A 339-amino-acid polypeptide reads, in one-letter code: Tetracenomycin polyketide synthesis 8-O-methyl transferase TcmO (339 aa).

S-adenosyl-L-methionine contacts are provided by residues D200 and 226-228; that span reads GDF. The active-site Proton acceptor is the H246.

It belongs to the class I-like SAM-binding methyltransferase superfamily. Cation-independent O-methyltransferase family.

It participates in antibiotic biosynthesis; tetracenomycin C biosynthesis. The sequence is that of Tetracenomycin polyketide synthesis 8-O-methyl transferase TcmO (tcmO) from Streptomyces glaucescens.